Consider the following 62-residue polypeptide: Beta-defensin 110 (62 aa).

The N-terminal stretch at 1 to 21 (MKIHLFFFILLFWVTILPARS) is a signal peptide. Disulfide bonds link cysteine 32–cysteine 60, cysteine 39–cysteine 53, and cysteine 43–cysteine 61.

It belongs to the beta-defensin family.

It is found in the secreted. Its function is as follows. Has antibacterial activity. The protein is Beta-defensin 110 (DEFB110) of Canis lupus familiaris (Dog).